The following is a 98-amino-acid chain: NADH-ubiquinone oxidoreductase chain 4L (98 aa).

Helical transmembrane passes span 1–21 (MSLVHMNVIVAFTLSLVGLLM), 29–49 (ALLCMEGMMLSLFVLAALTIL), and 61–81 (IILLVFAACEAAIGLALLVTI).

Belongs to the complex I subunit 4L family. Core subunit of respiratory chain NADH dehydrogenase (Complex I) which is composed of 45 different subunits.

It localises to the mitochondrion inner membrane. The enzyme catalyses a ubiquinone + NADH + 5 H(+)(in) = a ubiquinol + NAD(+) + 4 H(+)(out). Its function is as follows. Core subunit of the mitochondrial membrane respiratory chain NADH dehydrogenase (Complex I) which catalyzes electron transfer from NADH through the respiratory chain, using ubiquinone as an electron acceptor. Part of the enzyme membrane arm which is embedded in the lipid bilayer and involved in proton translocation. This is NADH-ubiquinone oxidoreductase chain 4L (MT-ND4L) from Ziphius cavirostris (Cuvier's beaked whale).